Reading from the N-terminus, the 195-residue chain is Probable molybdenum cofactor guanylyltransferase (195 aa).

Residues 8–10 (LSG), K20, D65, and D96 contribute to the GTP site. Residue D96 coordinates Mg(2+).

It belongs to the MobA family. It depends on Mg(2+) as a cofactor.

It is found in the cytoplasm. The enzyme catalyses Mo-molybdopterin + GTP + H(+) = Mo-molybdopterin guanine dinucleotide + diphosphate. In terms of biological role, transfers a GMP moiety from GTP to Mo-molybdopterin (Mo-MPT) cofactor (Moco or molybdenum cofactor) to form Mo-molybdopterin guanine dinucleotide (Mo-MGD) cofactor. The polypeptide is Probable molybdenum cofactor guanylyltransferase (Bacillus licheniformis (strain ATCC 14580 / DSM 13 / JCM 2505 / CCUG 7422 / NBRC 12200 / NCIMB 9375 / NCTC 10341 / NRRL NRS-1264 / Gibson 46)).